A 241-amino-acid chain; its full sequence is Thyroid transcription factor 1-associated protein 26 (241 aa).

2 disordered regions span residues 1–22 (MAPVRRSAKWRPGGIEARGEGV) and 182–205 (KRAAKKQEFERRKQEREEAQRQYK). Over residues 186–202 (KKQEFERRKQEREEAQR) the composition is skewed to basic and acidic residues.

It belongs to the TAP26 family. Interacts with NKX2-1. In terms of tissue distribution, ubiquitously expressed. In lung, expression is restricted to the alveolar epithelial cells.

The protein localises to the nucleus. In terms of biological role, component of the transcription complexes of the pulmonary surfactant-associated protein-B (SFTPB) and -C (SFTPC). Enhances homeobox protein Nkx-2.1-activated SFTPB and SFTPC promoter activities. In Homo sapiens (Human), this protein is Thyroid transcription factor 1-associated protein 26 (CCDC59).